The chain runs to 273 residues: Zinc finger protein 80 (273 aa).

2 C2H2-type zinc fingers span residues 49–71 (YKCK…HQIH) and 77–99 (YECQ…MRIH). A C2H2-type 3; atypical zinc finger spans residues 105–127 (CKCVECGKVFNRRSHLLCYRQIH). 4 consecutive C2H2-type zinc fingers follow at residues 133–155 (YECS…RMTH), 161–183 (FGCK…MKIH), 189–211 (YKCG…SMTH), and 217–239 (YECK…TRSH).

It belongs to the krueppel C2H2-type zinc-finger protein family.

It is found in the nucleus. In terms of biological role, may be involved in transcriptional regulation. The chain is Zinc finger protein 80 (ZNF80) from Gorilla gorilla gorilla (Western lowland gorilla).